The chain runs to 216 residues: Adenylate kinase (216 aa).

10-15 contacts ATP; that stretch reads GAGKGT. The NMP stretch occupies residues 30–59; it reads STGDMFRAAMKAETEMGLQAKSFIDKGALV. AMP is bound by residues threonine 31, arginine 36, 57-59, 85-88, and glutamine 92; these read ALV and GFPR. The interval 126 to 163 is LID; sequence GRRICKECGATYHLEFNPPAKADVCDKCGGELYQRSDD. ATP is bound at residue arginine 127. Residues cysteine 130 and cysteine 133 each coordinate Zn(2+). 136 to 137 contacts ATP; sequence TY. Residues cysteine 150 and cysteine 153 each coordinate Zn(2+). Residues arginine 160 and arginine 171 each contribute to the AMP site. Glutamine 199 is an ATP binding site.

It belongs to the adenylate kinase family. As to quaternary structure, monomer.

It is found in the cytoplasm. It carries out the reaction AMP + ATP = 2 ADP. Its pathway is purine metabolism; AMP biosynthesis via salvage pathway; AMP from ADP: step 1/1. Its function is as follows. Catalyzes the reversible transfer of the terminal phosphate group between ATP and AMP. Plays an important role in cellular energy homeostasis and in adenine nucleotide metabolism. The chain is Adenylate kinase from Bacillus cereus (strain B4264).